A 399-amino-acid polypeptide reads, in one-letter code: F-box/kelch-repeat protein At5g48980 (399 aa).

The segment covering methionine 1 to serine 11 has biased composition (polar residues). Positions methionine 1–threonine 29 are disordered. In terms of domain architecture, F-box spans threonine 29–arginine 75. The stretch at isoleucine 199 to serine 248 is one Kelch repeat.

The protein is F-box/kelch-repeat protein At5g48980 of Arabidopsis thaliana (Mouse-ear cress).